A 1603-amino-acid chain; its full sequence is Vitellogenin-4 (1603 aa).

An N-terminal signal peptide occupies residues Met-1 to Ala-15. In terms of domain architecture, Vitellogenin spans Phe-24–Val-685. Asn-1266 is a glycosylation site (N-linked (GlcNAc...) asparagine). One can recognise a VWFD domain in the interval Ala-1306 to Glu-1475. 2 disulfide bridges follow: Cys-1308-Cys-1438 and Cys-1330-Cys-1474.

Expressed in the intestine of adult hermaphrodites.

It is found in the secreted. Its function is as follows. Precursor of the egg-yolk proteins that are sources of nutrients during embryonic development. Together with other vitellogenins, may play a role in modulating life-span, acting via induction of autophagy and lysosomal lipolysis. In Caenorhabditis elegans, this protein is Vitellogenin-4 (vit-4).